A 168-amino-acid polypeptide reads, in one-letter code: MALLIEDKKQIVAEVSEIASTAFAAVVADYQGLTVEQLTTLRVEARKLGVATRVVRNTLAKRALQDTPFSILNDDLVGPTILAFSTSEDDMGAAARLFEEFAKTNKVFELKAAAFEGKLYQGADVSVIANLPNQEKALTMLASVLQAPVSKLGRLITALKEKNESEAA.

Belongs to the universal ribosomal protein uL10 family. In terms of assembly, part of the ribosomal stalk of the 50S ribosomal subunit. The N-terminus interacts with L11 and the large rRNA to form the base of the stalk. The C-terminus forms an elongated spine to which L12 dimers bind in a sequential fashion forming a multimeric L10(L12)X complex.

Forms part of the ribosomal stalk, playing a central role in the interaction of the ribosome with GTP-bound translation factors. In Acinetobacter baylyi (strain ATCC 33305 / BD413 / ADP1), this protein is Large ribosomal subunit protein uL10.